A 156-amino-acid polypeptide reads, in one-letter code: Large ribosomal subunit protein uL23 (156 aa).

Residues 1 to 19 (MAPKAKKEAPAPPKAEAKA) are compositionally biased toward basic and acidic residues. Residues 1–67 (MAPKAKKEAP…PKYPRKSAPR (67 aa)) form a disordered region. Ala-2 bears the N,N,N-trimethylalanine mark. Lys-14 participates in a covalent cross-link: Glycyl lysine isopeptide (Lys-Gly) (interchain with G-Cter in SUMO2). A compositionally biased stretch (basic residues) spans 20–67 (KALKAKKAVLKGVHSHKKKKIRTSPTFRRPKTLRLRRQPKYPRKSAPR). A beta-like import receptor binding (BIB) domain region spans residues 32-74 (VHSHKKKKIRTSPTFRRPKTLRLRRQPKYPRKSAPRRNKLDHY). Arg-41 is modified (citrulline). The residue at position 43 (Ser-43) is a Phosphoserine. Thr-45 is modified (phosphothreonine). Position 70 is an N6-acetyllysine (Lys-70).

Belongs to the universal ribosomal protein uL23 family. In terms of assembly, component of the large ribosomal subunit. Interacts with LYAR and GNL2. Interacts with MDM2; this interaction may promote MDM2-mediated p53/TP53 polyubiquitination. Directly interacts (via BIB domain) with IPO5, IPO7, KPNB1 and TNPO1; these interactions are involved in RPL23A nuclear import for the assembly of ribosomal subunits. Interacts with IPO8. Post-translationally, N-terminus is methylated by METTL11A/NTM1. Citrullinated by PADI4.

The protein localises to the cytoplasm. It is found in the nucleus. Its function is as follows. Component of the large ribosomal subunit. The ribosome is a large ribonucleoprotein complex responsible for the synthesis of proteins in the cell. Binds a specific region on the 26S rRNA. May promote p53/TP53 degradation possibly through the stimulation of MDM2-mediated TP53 polyubiquitination. In Bos taurus (Bovine), this protein is Large ribosomal subunit protein uL23 (RPL23A).